We begin with the raw amino-acid sequence, 671 residues long: DNA ligase (671 aa).

NAD(+) is bound by residues 32 to 36 (DAEYD), 81 to 82 (SL), and glutamate 113. Lysine 115 functions as the N6-AMP-lysine intermediate in the catalytic mechanism. 4 residues coordinate NAD(+): arginine 136, glutamate 173, lysine 290, and lysine 314. Zn(2+) contacts are provided by cysteine 408, cysteine 411, cysteine 426, and cysteine 432. The BRCT domain occupies 593–671 (EIDSPFAGKT…ETEMLHLLGS (79 aa)).

It belongs to the NAD-dependent DNA ligase family. LigA subfamily. Requires Mg(2+) as cofactor. Mn(2+) serves as cofactor.

The enzyme catalyses NAD(+) + (deoxyribonucleotide)n-3'-hydroxyl + 5'-phospho-(deoxyribonucleotide)m = (deoxyribonucleotide)n+m + AMP + beta-nicotinamide D-nucleotide.. Functionally, DNA ligase that catalyzes the formation of phosphodiester linkages between 5'-phosphoryl and 3'-hydroxyl groups in double-stranded DNA using NAD as a coenzyme and as the energy source for the reaction. It is essential for DNA replication and repair of damaged DNA. The polypeptide is DNA ligase (Escherichia coli O6:K15:H31 (strain 536 / UPEC)).